Reading from the N-terminus, the 258-residue chain is Adenosylcobinamide-GDP ribazoletransferase (258 aa).

6 consecutive transmembrane segments (helical) span residues Phe41–Ser61, Pro65–Phe85, Ile115–Met135, Ala136–Ser156, Leu197–Ala217, and Cys236–Thr256.

The protein belongs to the CobS family. Mg(2+) is required as a cofactor.

The protein resides in the cell inner membrane. It carries out the reaction alpha-ribazole + adenosylcob(III)inamide-GDP = adenosylcob(III)alamin + GMP + H(+). The catalysed reaction is alpha-ribazole 5'-phosphate + adenosylcob(III)inamide-GDP = adenosylcob(III)alamin 5'-phosphate + GMP + H(+). It participates in cofactor biosynthesis; adenosylcobalamin biosynthesis; adenosylcobalamin from cob(II)yrinate a,c-diamide: step 7/7. Joins adenosylcobinamide-GDP and alpha-ribazole to generate adenosylcobalamin (Ado-cobalamin). Also synthesizes adenosylcobalamin 5'-phosphate from adenosylcobinamide-GDP and alpha-ribazole 5'-phosphate. In Ralstonia nicotianae (strain ATCC BAA-1114 / GMI1000) (Ralstonia solanacearum), this protein is Adenosylcobinamide-GDP ribazoletransferase.